Reading from the N-terminus, the 436-residue chain is Testican-3 (436 aa).

Positions 1–22 are cleaved as a signal peptide; sequence MLKVSALLCVCAAAWCSQTLAA. 8 disulfide bridges follow: C90–C101, C95–C111, C139–C169, C142–C162, C151–C183, C317–C341, C352–C359, and C361–C380. In terms of domain architecture, Kazal-like spans 133-185; the sequence is GLPSSTCKPCPIAYASPVCGSDGHSYSSQCKLEYQACVLGKQISIKCEGRCPC. The 67-residue stretch at 314–380 folds into the Thyroglobulin type-1 domain; the sequence is DPPCHTELSN…GSRINGVADC (67 aa). 2 O-linked (Xyl...) (glycosaminoglycan) serine glycosylation sites follow: S387 and S392. The tract at residues 393–436 is disordered; sequence GDFREWTDDEGEEDDIMNDKDDIEDDDEDEGDDDDDGDVHDGYI. Residues 399 to 430 are compositionally biased toward acidic residues; that stretch reads TDDEGEEDDIMNDKDDIEDDDEDEGDDDDDGD.

In terms of processing, contains chondroitin sulfate and heparan sulfate O-linked oligosaccharides. As to expression, expressed in brain.

Its subcellular location is the secreted. The protein localises to the extracellular space. It is found in the extracellular matrix. Its function is as follows. May participate in diverse steps of neurogenesis. Inhibits the processing of pro-matrix metalloproteinase 2 (MMP-2) by MT1-MMP and MT3-MMP. May interfere with tumor invasion. This is Testican-3 (Spock3) from Mus musculus (Mouse).